A 128-amino-acid polypeptide reads, in one-letter code: Large-conductance mechanosensitive channel (128 aa).

2 helical membrane-spanning segments follow: residues 11 to 31 (FALKGNVLDLAVAVVIGAAFG) and 70 to 90 (GAFIQSIVDFVIIAFAIFIFV).

It belongs to the MscL family. In terms of assembly, homopentamer.

The protein resides in the cell membrane. In terms of biological role, channel that opens in response to stretch forces in the membrane lipid bilayer. May participate in the regulation of osmotic pressure changes within the cell. This is Large-conductance mechanosensitive channel from Listeria innocua serovar 6a (strain ATCC BAA-680 / CLIP 11262).